The following is a 190-amino-acid chain: Membrane protein FAM174A (190 aa).

A signal peptide spans 1 to 29; it reads MPTRRGCSGPCHFLASAFVLLLLPALNQS. N-linked (GlcNAc...) asparagine glycans are attached at residues asparagine 27 and asparagine 83. At 30 to 123 the chain is on the extracellular side; the sequence is VVLPSTVPRA…NPSDKPMTQR (94 aa). The tract at residues 37 to 119 is disordered; the sequence is PRAVQESKPL…AVSPNPSDKP (83 aa). Residues 124-144 traverse the membrane as a helical segment; sequence ALTVLVVVSAAVLVYFVVRTV. The Cytoplasmic portion of the chain corresponds to 145 to 190; it reads RMRRRNRKTRRYGVLDTNIENMELTPLEQDDEDDDNTLFDANHPRR. The interval 168–190 is disordered; the sequence is LTPLEQDDEDDDNTLFDANHPRR. The span at 172-181 shows a compositional bias: acidic residues; that stretch reads EQDDEDDDNT.

It belongs to the FAM174 family.

It is found in the membrane. The polypeptide is Membrane protein FAM174A (Fam174a) (Rattus norvegicus (Rat)).